Consider the following 457-residue polypeptide: D-hydantoinase (457 aa).

Zn(2+) contacts are provided by His-57 and His-59. Ser-69 carries the phosphoserine modification. Lys-148 contacts Zn(2+). Position 148 is an N6-carboxylysine (Lys-148). Tyr-153 contacts substrate. Residues His-181 and His-237 each coordinate Zn(2+). Position 286 (Thr-286) interacts with substrate. Asp-313 serves as a coordination point for Zn(2+). Asn-335 is a substrate binding site.

This sequence belongs to the metallo-dependent hydrolases superfamily. Hydantoinase/dihydropyrimidinase family. In terms of assembly, homodimer and homotetramer. It depends on Zn(2+) as a cofactor. In terms of processing, carboxylation allows a single lysine to coordinate two zinc ions.

Its function is as follows. Catalyzes the stereospecific hydrolysis of the cyclic amide bond of D-hydantoin derivatives. The protein is D-hydantoinase (hyuA) of Ralstonia pickettii (Burkholderia pickettii).